We begin with the raw amino-acid sequence, 485 residues long: Zinc finger protein 639 (485 aa).

Residues 1 to 14 (MSEYPKKRKRKTLH) are compositionally biased toward basic residues. 2 disordered regions span residues 1–23 (MSEY…DSSG) and 54–82 (DNKD…SRSQ). Residue serine 60 is modified to Phosphoserine. Lysine 76 participates in a covalent cross-link: Glycyl lysine isopeptide (Lys-Gly) (interchain with G-Cter in SUMO2). Serine 88 is modified (phosphoserine). Glycyl lysine isopeptide (Lys-Gly) (interchain with G-Cter in SUMO2) cross-links involve residues lysine 177, lysine 181, and lysine 226. 8 consecutive C2H2-type zinc fingers follow at residues 204 to 227 (YKCE…ILKH), 233 to 255 (NVCR…AKLH), 260 to 283 (YICK…ADTH), 289 to 311 (YWCE…FQEH), 374 to 397 (FVCQ…AIEH), 403 to 425 (HVCD…LNSH), 431 to 454 (YLCQ…DFKH), and 460 to 482 (HKCS…LPVH). Positions 371–455 (KNFFVCQVCG…LKIHLDFKHS (85 aa)) are interaction with CTNNA2.

The protein belongs to the krueppel C2H2-type zinc-finger protein family. As to quaternary structure, interacts with CTNNA2.

The protein resides in the nucleus. In terms of biological role, binds DNA and may function as a transcriptional repressor. This is Zinc finger protein 639 (Znf639) from Rattus norvegicus (Rat).